The primary structure comprises 266 residues: GTP cyclohydrolase FolE2 1 (266 aa).

This sequence belongs to the GTP cyclohydrolase IV family.

It catalyses the reaction GTP + H2O = 7,8-dihydroneopterin 3'-triphosphate + formate + H(+). The protein operates within cofactor biosynthesis; 7,8-dihydroneopterin triphosphate biosynthesis; 7,8-dihydroneopterin triphosphate from GTP: step 1/1. In terms of biological role, converts GTP to 7,8-dihydroneopterin triphosphate. The polypeptide is GTP cyclohydrolase FolE2 1 (Dechloromonas aromatica (strain RCB)).